An 860-amino-acid chain; its full sequence is Receptor-like protein 31 (860 aa).

The signal sequence occupies residues 1 to 23; it reads MMIPSQSCFCFFFMVSFFLHTLA. Residues 24–809 are Extracellular-facing; it reads SPTLRHCRHD…SEPEEHVINW (786 aa). 10 N-linked (GlcNAc...) asparagine glycosylation sites follow: asparagine 49, asparagine 64, asparagine 88, asparagine 95, asparagine 112, asparagine 117, asparagine 154, asparagine 178, asparagine 202, and asparagine 213. 6 LRR repeats span residues 108-131, 132-155, 156-179, 181-202, 203-226, and 227-251; these read QHLH…LGNL, FRLT…IGNL, SRLT…IGNL, QLEY…TFSN, LTKL…DMSG, and FQNL…LFTI. Residues 252-276 form an LRR 7; degenerate repeat; that stretch reads PSLRWANLEGNMFKGPIEFRNMYSP. LRR repeat units lie at residues 277–301, 302–325, 326–349, 350–374, 376–398, 400–419, 420–444, 446–468, 469–494, 496–517, 518–541, 543–564, 565–591, and 592–615; these read STRL…LSQY, LNLI…LFTI, PTLE…NMSS, SSSL…VSQY, NLEE…ISKL, KLEY…PSWL, WRLT…GLDE, QVQW…ICKL, RSLE…SFMV, LTDL…FVNA, TKLL…LIHC, AMQL…WLGS, LPSL…SIGF, and QSLR…YFSS. Residues asparagine 313, asparagine 346, and asparagine 364 are each glycosylated (N-linked (GlcNAc...) asparagine). A glycan (N-linked (GlcNAc...) asparagine) is linked at asparagine 429. Residues asparagine 482, asparagine 503, and asparagine 516 are each glycosylated (N-linked (GlcNAc...) asparagine). N-linked (GlcNAc...) asparagine glycosylation is found at asparagine 642, asparagine 673, and asparagine 697. LRR repeat units follow at residues 665–690, 691–714, 716–738, and 740–763; these read INEE…IGLL, KELR…LANL, KLEA…LGSL, and FMST…QFQG. Residues asparagine 745 and asparagine 765 are each glycosylated (N-linked (GlcNAc...) asparagine). A helical membrane pass occupies residues 810 to 830; that stretch reads IAAGIAYGPGVVCGLVIGHIF. Residues 831–860 lie on the Cytoplasmic side of the membrane; that stretch reads LSHKHECWFMEKFRRKKPKVVTRIARPSKH.

It belongs to the RLP family.

Its subcellular location is the cell membrane. This is Receptor-like protein 31 from Arabidopsis thaliana (Mouse-ear cress).